The following is a 557-amino-acid chain: Probable protein kinase UbiB (557 aa).

Residues 121–509 (SFDTVPLASA…RKLQTRVVTA (389 aa)) form the Protein kinase domain. ATP is bound by residues 127–135 (LASASIAQV) and K154. D289 functions as the Proton acceptor in the catalytic mechanism. 2 helical membrane passes run 506 to 526 (VVTA…YGLH) and 535 to 555 (VPVW…VAWL).

Belongs to the ABC1 family. UbiB subfamily.

It is found in the cell inner membrane. It participates in cofactor biosynthesis; ubiquinone biosynthesis [regulation]. Its function is as follows. Is probably a protein kinase regulator of UbiI activity which is involved in aerobic coenzyme Q (ubiquinone) biosynthesis. This chain is Probable protein kinase UbiB, found in Xanthomonas euvesicatoria pv. vesicatoria (strain 85-10) (Xanthomonas campestris pv. vesicatoria).